Reading from the N-terminus, the 193-residue chain is Dense granule protein 2 (193 aa).

The N-linked (GlcNAc...) asparagine glycan is linked to Asn-4. The chain crosses the membrane as a helical span at residues 14-34; it reads FSPLTVVMLAVTLVAFMGVPL. N-linked (GlcNAc...) asparagine glycosylation is present at Asn-74. The tract at residues 75–140 is disordered; the sequence is SSELAGSRDK…APKPVPVRSA (66 aa). A compositionally biased stretch (acidic residues) spans 88–98; the sequence is EAEEEAAEVET. The helical transmembrane segment at 153 to 173 threads the bilayer; sequence HRVIGTAVIAAVVAALLWKFS. The disordered stretch occupies residues 174 to 193; sequence RRRSGAPREGGENENGGEEK.

This sequence belongs to the Gra6 family.

Its subcellular location is the membrane. The protein is Dense granule protein 2 (DG2) of Neospora caninum (Coccidian parasite).